A 349-amino-acid chain; its full sequence is MKIKAVGAYSAKQPLEPMDITRREPGPNDVKIEIAYCGVCHSDLHQVRSEWAGTVYPCVPGHEIVGRVVAVGDQVEKYAPGDLVGVGCIVDSCKHCEECEDGLENYCDHMTGTYNSPTPDEPGHTLGGYSQQIVVHERYVLRIRHPQEQLAAVAPLLCAGITTYSPLRHWQAGPGKKVGVVGIGGLGHMGIKLAHAMGAHVVAFTTSEAKREAAKALGADEVVNSRNADEMAAHLKSFDFILNTVAAPHNLDDFTTLLKRDGTMTLVGAPATPHKSPEVFNLIMKRRAIAGSMIGGIPETQEMLDFCAEHGIVADIEMIRADQINEAYERMLRGDVKYRFVIDNRTLTD.

Zn(2+) is bound by residues Cys-40, His-62, Cys-93, Cys-96, Cys-99, Cys-107, and Cys-158.

It belongs to the zinc-containing alcohol dehydrogenase family. The cofactor is Zn(2+).

It catalyses the reaction a primary alcohol + NADP(+) = an aldehyde + NADPH + H(+). Catalyzes the reduction of a wide range of aldehydes into their corresponding alcohols. Has a strong preference for NADPH over NADH as the electron donor. Cannot use a ketone as substrate. Is a major source of NADPH-dependent aldehyde reductase activity in E.coli. The in vivo functions of YahK has yet to be determined. The sequence is that of Aldehyde reductase YahK (yahK) from Escherichia coli (strain K12).